Here is a 525-residue protein sequence, read N- to C-terminus: GMP synthase [glutamine-hydrolyzing] (525 aa).

Residues 8 to 207 (KILILDFGSQ…ALDICQCDAN (200 aa)) form the Glutamine amidotransferase type-1 domain. C85 serves as the catalytic Nucleophile. Residues H181 and E183 contribute to the active site. In terms of domain architecture, GMPS ATP-PPase spans 208 to 400 (WKPASIIEDA…LGLPYDMLYR (193 aa)). 235-241 (SGGVDSS) serves as a coordination point for ATP.

In terms of assembly, homodimer.

The enzyme catalyses XMP + L-glutamine + ATP + H2O = GMP + L-glutamate + AMP + diphosphate + 2 H(+). It participates in purine metabolism; GMP biosynthesis; GMP from XMP (L-Gln route): step 1/1. Its function is as follows. Catalyzes the synthesis of GMP from XMP. The protein is GMP synthase [glutamine-hydrolyzing] of Shewanella woodyi (strain ATCC 51908 / MS32).